Consider the following 55-residue polypeptide: ATP synthase protein 8 (55 aa).

A helical membrane pass occupies residues 8-28 (WWIVNFSLIWASVLIVISLLL). The tract at residues 34 to 55 (NSAGQSSSSLTLNKTTTNWQWL) is disordered. A compositionally biased stretch (low complexity) spans 39–55 (SSSSLTLNKTTTNWQWL).

It belongs to the ATPase protein 8 family. F-type ATPases have 2 components, CF(1) - the catalytic core - and CF(0) - the membrane proton channel.

It localises to the mitochondrion membrane. In terms of biological role, mitochondrial membrane ATP synthase (F(1)F(0) ATP synthase or Complex V) produces ATP from ADP in the presence of a proton gradient across the membrane which is generated by electron transport complexes of the respiratory chain. F-type ATPases consist of two structural domains, F(1) - containing the extramembraneous catalytic core and F(0) - containing the membrane proton channel, linked together by a central stalk and a peripheral stalk. During catalysis, ATP synthesis in the catalytic domain of F(1) is coupled via a rotary mechanism of the central stalk subunits to proton translocation. Part of the complex F(0) domain. Minor subunit located with subunit a in the membrane. The protein is ATP synthase protein 8 (MT-ATP8) of Strongylocentrotus purpuratus (Purple sea urchin).